We begin with the raw amino-acid sequence, 586 residues long: Ezrin (586 aa).

The FERM domain occupies 2-295 (PKPINVRVTT…GNHELYMRRR (294 aa)). N6-acetyllysine is present on Lys60. The [IL]-x-C-x-x-[DE] motif motif lies at 115-120 (IYCPPE). Tyr146 carries the post-translational modification Phosphotyrosine; by PDGFR. The segment at 244 to 586 (EIRNISFNDK…KQRIDEFEAM (343 aa)) is interaction with SCYL3. Residues 302–462 (VQQMKAQARE…QDDLVKTKEE (161 aa)) are a coiled coil. Residues 306–338 (KAQAREEKHQKQLERQQLETEKKRRETVEREKE) form a disordered region. Over residues 308–338 (QAREEKHQKQLERQQLETEKKRRETVEREKE) the composition is skewed to basic and acidic residues. The residue at position 354 (Tyr354) is a Phosphotyrosine; by PDGFR. Phosphoserine is present on Ser366. A Phosphotyrosine modification is found at Tyr478. The tract at residues 534–565 (LSNELSQARDENKRTHNDIIHNENMRQGRDKY) is disordered. Position 535 is a phosphoserine (Ser535). Residues 540 to 565 (QARDENKRTHNDIIHNENMRQGRDKY) show a composition bias toward basic and acidic residues. Thr567 bears the Phosphothreonine; by ROCK2 and PKC/PRKCI mark.

Interacts with PALS1 and NHERF2. Found in a complex with EZR, PODXL and NHERF2. Interacts with MCC, PLEKHG6, PODXL, SCYL3/PACE1, NHERF1 and TMEM8B. Interacts (when phosphorylated) with FES/FPS. Interacts with dimeric S100P, the interaction may be activating through unmasking of F-actin binding sites. Identified in complexes that contain VIM, EZR, AHNAK, BFSP1, BFSP2, ANK2, PLEC, PRX and spectrin. Detected in a complex composed of at least EZR, AHNAK, PPL and PRX. Interacts with PDPN (via cytoplasmic domain); activates RHOA and promotes epithelial-mesenchymal transition. Interacts with SPN/CD43 cytoplasmic tail. Interacts with CD44 and ICAM2. Interacts with SLC9A3; interaction targets SLC9A3 to the apical membrane. Interacts with SLC9A1; regulates interactions of SLC9A1 with cytoskeletal and promotes stress fiber formation. Interacts with CLIC5; may work together in a complex which also includes RDX and MYO6 to stabilize linkages between the plasma membrane and subjacent actin cytoskeleton at the base of stereocilia. Post-translationally, phosphorylated by tyrosine-protein kinases. Phosphorylation by ROCK2 suppresses the head-to-tail association of the N-terminal and C-terminal halves resulting in an opened conformation which is capable of actin and membrane-binding. S-nitrosylation is induced by interferon-gamma and oxidatively-modified low-densitity lipoprotein (LDL(ox)) possibly implicating the iNOS-S100A8/9 transnitrosylase complex. As to expression, detected in eye lens fiber cells. Expressed in cerebrum and cerebellum (at protein level). Component of the microvilli of intestinal epithelial cells.

The protein resides in the apical cell membrane. It localises to the cell projection. Its subcellular location is the microvillus membrane. The protein localises to the ruffle membrane. It is found in the cytoplasm. The protein resides in the cell cortex. It localises to the cytoskeleton. Its subcellular location is the microvillus. With respect to regulation, a head-to-tail association, of the N-terminal and C-terminal halves results in a closed conformation (inactive form) which is incapable of actin or membrane-binding. Functionally, probably involved in connections of major cytoskeletal structures to the plasma membrane. In epithelial cells, required for the formation of microvilli and membrane ruffles on the apical pole. Along with PLEKHG6, required for normal macropinocytosis. The sequence is that of Ezrin (Ezr) from Mus musculus (Mouse).